Reading from the N-terminus, the 414-residue chain is Putative competence-damage inducible protein (414 aa).

The protein belongs to the CinA family.

The polypeptide is Putative competence-damage inducible protein (Clostridium novyi (strain NT)).